The chain runs to 328 residues: Nucleotide-binding protein Blon_1085/BLIJ_1109 (328 aa).

Residues 1 to 33 are disordered; the sequence is MSQQTTIRDTGEAAATNAPANSATSTSTPDNQP. Residues 13 to 29 are compositionally biased toward low complexity; the sequence is AAATNAPANSATSTSTP. An ATP-binding site is contributed by 46–53; that stretch reads GMSGAGRS. A GTP-binding site is contributed by 101–104; the sequence is DVRS.

This sequence belongs to the RapZ-like family.

Its function is as follows. Displays ATPase and GTPase activities. This chain is Nucleotide-binding protein Blon_1085/BLIJ_1109, found in Bifidobacterium longum subsp. infantis (strain ATCC 15697 / DSM 20088 / JCM 1222 / NCTC 11817 / S12).